The sequence spans 258 residues: Ureidoacrylate amidohydrolase RutB (258 aa).

The interval 1–23 (MDRPTTYPMDQPAGFRDAQGRHG) is disordered. Aspartate 47 (proton acceptor) is an active-site residue. Residue lysine 156 is part of the active site. The active-site Nucleophile is cysteine 189.

The protein belongs to the isochorismatase family. RutB subfamily.

The catalysed reaction is (Z)-3-ureidoacrylate + H2O + H(+) = (Z)-3-aminoacrylate + NH4(+) + CO2. The enzyme catalyses (Z)-3-ureidoacrylate + H2O = (Z)-3-aminoacrylate + carbamate + H(+). It carries out the reaction (Z)-2-methylureidoacrylate + H2O + H(+) = (Z)-2-methylaminoacrylate + NH4(+) + CO2. Hydrolyzes ureidoacrylate to form aminoacrylate and carbamate. The carbamate hydrolyzes spontaneously, thereby releasing one of the nitrogen atoms of the pyrimidine ring as ammonia and one of its carbon atoms as CO2. This is Ureidoacrylate amidohydrolase RutB from Methylobacterium radiotolerans (strain ATCC 27329 / DSM 1819 / JCM 2831 / NBRC 15690 / NCIMB 10815 / 0-1).